Consider the following 448-residue polypeptide: O-Mevalon transferase yanI (448 aa).

A glycan (N-linked (GlcNAc...) asparagine) is linked at Asn-2. The next 8 membrane-spanning stretches (helical) occupy residues 21–41 (VLLS…LLAV), 54–74 (YGLL…PPPP), 79–96 (AVLY…ARYF), 165–185 (FVTA…LVEV), 217–237 (LIVL…VLPL), 316–336 (MLML…SYHV), 350–370 (VKYF…CWLL), and 390–410 (IVTA…PVAL).

The protein belongs to the wax synthase family.

It localises to the membrane. It participates in secondary metabolite biosynthesis; terpenoid biosynthesis. O-Mevalon transferase yanI; part of the gene cluster that mediates the biosynthesis of yanuthone D, a fungal isoprenoid epoxycyclohexenone that acts as an antibiotic against fungi and bacteria. The first step of the pathway is the synthesis of 6-methylsalicylic acid (6-MSA) by the polyketide synthase yanA. 6-MSA is then converted to m-cresol by the decarboxylase yanB. The cytochrome P450 monooxygenase yanC then catalyzes the oxidation of m-cresol to toluquinol. Epoxidation of toluquinol is then performed by the short chain dehydrogenase yanD, with the help of yanE, and a further prenylation by yanG leads to 7-deacetoxyyanuthone A. The next step is the hydroxylation of C-22 of 7-deacetoxyyanuthone A by the cytochrome P450 monooxygenase yanH to yield 22-deacetylyanuthone A. O-Mevalon transferase yanI then attaches mevalon to the hydroxyl group of 22-deacetylyanuthone A to produce yanuthone E. Finally, the FAD-dependent monooxygenase yanF oxidizes the hydroxyl group at C15 of yanuthone E to form yanuthone D. Furthermore, several branching points in the pathway lead to the production of yanuthones F and G from 7-deacetoxyyanuthone A; yanuthones H and I from 22-deacetylyanuthone A; and yanuthone J from yanuthone E. This Aspergillus niger (strain ATCC 1015 / CBS 113.46 / FGSC A1144 / LSHB Ac4 / NCTC 3858a / NRRL 328 / USDA 3528.7) protein is O-Mevalon transferase yanI.